Here is a 340-residue protein sequence, read N- to C-terminus: Uroporphyrinogen decarboxylase (340 aa).

Substrate is bound by residues 21-25, Asp-71, Tyr-147, Ser-202, and His-316; that span reads RQAGR.

Belongs to the uroporphyrinogen decarboxylase family. As to quaternary structure, homodimer.

The protein resides in the cytoplasm. The catalysed reaction is uroporphyrinogen III + 4 H(+) = coproporphyrinogen III + 4 CO2. Its pathway is porphyrin-containing compound metabolism; protoporphyrin-IX biosynthesis; coproporphyrinogen-III from 5-aminolevulinate: step 4/4. Functionally, catalyzes the decarboxylation of four acetate groups of uroporphyrinogen-III to yield coproporphyrinogen-III. This Nitratiruptor sp. (strain SB155-2) protein is Uroporphyrinogen decarboxylase.